Reading from the N-terminus, the 360-residue chain is Phosphoserine aminotransferase (360 aa).

R42 is an L-glutamate binding site. Positions 102, 152, 171, and 194 each coordinate pyridoxal 5'-phosphate. K195 bears the N6-(pyridoxal phosphate)lysine mark. 237–238 is a pyridoxal 5'-phosphate binding site; it reads NT.

The protein belongs to the class-V pyridoxal-phosphate-dependent aminotransferase family. SerC subfamily. In terms of assembly, homodimer. Requires pyridoxal 5'-phosphate as cofactor.

It is found in the cytoplasm. It catalyses the reaction O-phospho-L-serine + 2-oxoglutarate = 3-phosphooxypyruvate + L-glutamate. It carries out the reaction 4-(phosphooxy)-L-threonine + 2-oxoglutarate = (R)-3-hydroxy-2-oxo-4-phosphooxybutanoate + L-glutamate. It functions in the pathway amino-acid biosynthesis; L-serine biosynthesis; L-serine from 3-phospho-D-glycerate: step 2/3. Its pathway is cofactor biosynthesis; pyridoxine 5'-phosphate biosynthesis; pyridoxine 5'-phosphate from D-erythrose 4-phosphate: step 3/5. In terms of biological role, catalyzes the reversible conversion of 3-phosphohydroxypyruvate to phosphoserine and of 3-hydroxy-2-oxo-4-phosphonooxybutanoate to phosphohydroxythreonine. The protein is Phosphoserine aminotransferase of Coxiella burnetii (strain RSA 493 / Nine Mile phase I).